The sequence spans 131 residues: Small ribosomal subunit protein bS6 (131 aa).

The tract at residues glutamate 98–glutamate 131 is disordered. The span at lysine 104–phenylalanine 116 shows a compositional bias: basic and acidic residues. Residues threonine 120–glutamate 131 are compositionally biased toward acidic residues.

This sequence belongs to the bacterial ribosomal protein bS6 family.

Binds together with bS18 to 16S ribosomal RNA. The sequence is that of Small ribosomal subunit protein bS6 from Cronobacter sakazakii (strain ATCC BAA-894) (Enterobacter sakazakii).